Reading from the N-terminus, the 132-residue chain is EF-hand calcium-binding domain-containing protein 10 (132 aa).

EF-hand domains lie at 64 to 99 and 120 to 132; these read MDNSNTVSMFEMMDMAGRGCISFVQYKEALKNLGLC and EMNKRMEKMWSMF.

The chain is EF-hand calcium-binding domain-containing protein 10 (Efcab10) from Mus musculus (Mouse).